A 292-amino-acid chain; its full sequence is Elongation factor Ts (292 aa).

The segment at 80–83 (TDFV) is involved in Mg(2+) ion dislocation from EF-Tu.

The protein belongs to the EF-Ts family.

Its subcellular location is the cytoplasm. Associates with the EF-Tu.GDP complex and induces the exchange of GDP to GTP. It remains bound to the aminoacyl-tRNA.EF-Tu.GTP complex up to the GTP hydrolysis stage on the ribosome. The sequence is that of Elongation factor Ts from Mycoplasmopsis synoviae (strain 53) (Mycoplasma synoviae).